Here is a 380-residue protein sequence, read N- to C-terminus: UDP-3-O-acylglucosamine N-acyltransferase (380 aa).

Residue His263 is the Proton acceptor of the active site.

This sequence belongs to the transferase hexapeptide repeat family. LpxD subfamily. In terms of assembly, homotrimer.

The enzyme catalyses a UDP-3-O-[(3R)-3-hydroxyacyl]-alpha-D-glucosamine + a (3R)-hydroxyacyl-[ACP] = a UDP-2-N,3-O-bis[(3R)-3-hydroxyacyl]-alpha-D-glucosamine + holo-[ACP] + H(+). It participates in bacterial outer membrane biogenesis; LPS lipid A biosynthesis. Catalyzes the N-acylation of UDP-3-O-acylglucosamine using 3-hydroxyacyl-ACP as the acyl donor. Is involved in the biosynthesis of lipid A, a phosphorylated glycolipid that anchors the lipopolysaccharide to the outer membrane of the cell. This is UDP-3-O-acylglucosamine N-acyltransferase from Rhodopirellula baltica (strain DSM 10527 / NCIMB 13988 / SH1).